The primary structure comprises 204 residues: MSTFSVFNFQFSIKQMTGKLIIFSAPSGSGKSTIINYLLTQNLNLAFSISATSRPPRGTEKHGVEYFFLTPEEFRCRIENNEFLEYEEVYKDRYYGTLKEQVEKQLEKGQNVVFDLDVVGGCNIKKYYGERALSIFVQPPSIEELRCRLTGRGTDEPEVIECRIAKAEYEMTFAPQFDRVIVNDDLEAAKAETLEVIKEFLNKE.

The region spanning 18–198 (GKLIIFSAPS…AKAETLEVIK (181 aa)) is the Guanylate kinase-like domain. Position 25–32 (25–32 (APSGSGKS)) interacts with ATP.

This sequence belongs to the guanylate kinase family.

The protein resides in the cytoplasm. The enzyme catalyses GMP + ATP = GDP + ADP. Functionally, essential for recycling GMP and indirectly, cGMP. The sequence is that of Guanylate kinase from Bacteroides thetaiotaomicron (strain ATCC 29148 / DSM 2079 / JCM 5827 / CCUG 10774 / NCTC 10582 / VPI-5482 / E50).